Reading from the N-terminus, the 419-residue chain is UDP-N-acetylglucosamine 1-carboxyvinyltransferase (419 aa).

22–23 (KN) contacts phosphoenolpyruvate. Residue Arg91 coordinates UDP-N-acetyl-alpha-D-glucosamine. Cys115 (proton donor) is an active-site residue. At Cys115 the chain carries 2-(S-cysteinyl)pyruvic acid O-phosphothioketal. UDP-N-acetyl-alpha-D-glucosamine is bound by residues 120–124 (RPVDL), 160–163 (KVSV), Asp305, and Val327.

The protein belongs to the EPSP synthase family. MurA subfamily.

It localises to the cytoplasm. The catalysed reaction is phosphoenolpyruvate + UDP-N-acetyl-alpha-D-glucosamine = UDP-N-acetyl-3-O-(1-carboxyvinyl)-alpha-D-glucosamine + phosphate. It participates in cell wall biogenesis; peptidoglycan biosynthesis. Functionally, cell wall formation. Adds enolpyruvyl to UDP-N-acetylglucosamine. The polypeptide is UDP-N-acetylglucosamine 1-carboxyvinyltransferase (Salmonella agona (strain SL483)).